The primary structure comprises 514 residues: MKLAYWMYAGPAHIGTLRVASSFKNVHAIMHAPLGDDYFNVMRSMLERERDFTPVTASIVDRHVLARGSQEKVVETITRKDKEEQPDLILLTPTCTSSILQEDLQNFVNRAATESKSDVILADVNHYRVNELQAADRTLEQIVRFYIEKAKTQNDLATIKTEKPSVNIIGIFTLGFHNHHDCRELKRLLTDLGISINEVIPEGGSIKNLKNLPKAWFNLIPYREVGLMTAKYLEKELNMPFVATTPMGVIDTAICIREIEAILNFTNQSKIDKEPYNFEDYIDQQTRFVSQAAWFSRSIDCQNLTGKKAIVFGDSTHAASMTKILAREMGIRISCAGTYCKHDADWFREQVSGFCDSVLITDDHTKVGDMIARVEPAAIFGTQMERHVGKRLDIPCGVISAPVHIQNFPLGYRPFLGYEGTNQIADLVYNSFTLGMEDHLLEIFGGHDTKQVITKSLSTDSNLTWTIEGLAELNKIPGFVRAKIKRNTEKFARENNISEITIETMYAAKEAVGA.

Position 36 (aspartate 36) interacts with [4Fe-4S] cluster. Aspartate 300 acts as the Proton donor in catalysis. 435–436 contacts substrate; sequence GM.

The protein belongs to the ChlB/BchB/BchZ family. Protochlorophyllide reductase is composed of three subunits; ChlL, ChlN and ChlB. Forms a heterotetramer of two ChlB and two ChlN subunits. It depends on [4Fe-4S] cluster as a cofactor.

The protein resides in the plastid. It is found in the chloroplast. It catalyses the reaction chlorophyllide a + oxidized 2[4Fe-4S]-[ferredoxin] + 2 ADP + 2 phosphate = protochlorophyllide a + reduced 2[4Fe-4S]-[ferredoxin] + 2 ATP + 2 H2O. It functions in the pathway porphyrin-containing compound metabolism; chlorophyll biosynthesis (light-independent). Functionally, component of the dark-operative protochlorophyllide reductase (DPOR) that uses Mg-ATP and reduced ferredoxin to reduce ring D of protochlorophyllide (Pchlide) to form chlorophyllide a (Chlide). This reaction is light-independent. The NB-protein (ChlN-ChlB) is the catalytic component of the complex. The sequence is that of Light-independent protochlorophyllide reductase subunit B from Pleurastrum terricola (Filamentous green alga).